Here is a 624-residue protein sequence, read N- to C-terminus: Diatom spindle kinesin-1 (624 aa).

The disordered stretch occupies residues M1–N59. The segment at M1 to P85 is globular. Basic and acidic residues-rich tracts occupy residues G17–R33 and Q42–N54. The region spanning N95–Q411 is the Kinesin motor domain. G186 to T193 contacts ATP. The stretch at S426 to Y624 forms a coiled coil. The segment covering V478–V511 has biased composition (acidic residues). The interval V478 to L528 is disordered.

It belongs to the TRAFAC class myosin-kinesin ATPase superfamily. Kinesin family. MCAK/KIF2 subfamily.

The protein resides in the cytoplasm. The protein localises to the cytoskeleton. Functionally, involved in anaphase spindle elongation. This is Diatom spindle kinesin-1 (DSK1) from Cylindrotheca fusiformis (Marine diatom).